Here is a 687-residue protein sequence, read N- to C-terminus: Immune inhibitor A (687 aa).

Residues 1-12 show a composition bias toward basic and acidic residues; sequence MKDAKADTKEKL. Residues 1 to 25 constitute a signal peptide (or 32); sequence MKDAKADTKEKLNQPATGTPAATGP. A disordered region spans residues 1–43; it reads MKDAKADTKEKLNQPATGTPAATGPVKGGLNGKVPTSPAKQKA. Residues 26 to 40 constitute a propeptide that is removed on maturation; the sequence is VKGGLNGKVPTSPAK. Histidine 266 is a binding site for Zn(2+). Glutamate 267 is a catalytic residue. A Zn(2+)-binding site is contributed by histidine 270.

Belongs to the peptidase M6 family. Requires Zn(2+) as cofactor. Ca(2+) is required as a cofactor.

Its subcellular location is the secreted. In terms of biological role, neutral metalloprotease that is secreted to degrade antibacterial proteins produced by the insect host for its defense (attacins and cecropins). Probably degrades some unknown crucial protein(s) too, since it is toxic when injected to insect larvae. This Bacillus thuringiensis subsp. alesti protein is Immune inhibitor A (ina).